Reading from the N-terminus, the 219-residue chain is MSTIQLEAQSRTDMGKGASRRLRRLENKVPAVIYGGSKKPMAIHFSHNKVIKALETESIYSSVFDITVDGKVEHVILKALQRHPYKPIVLHMDLQRVSSKDILVKLVPVHFINEEQSPGIKAGGIVQHTMTQVEIRCQAKDLPEFIEVDMSKVGMDDVVHLSDLKLPKGVQLTVDVTDGSHDAPVVSIHAAKVSSTELEETPEVPASAVPTTDQGESAE.

The tract at residues Val193–Glu219 is disordered. Over residues Val209–Glu219 the composition is skewed to polar residues.

Belongs to the bacterial ribosomal protein bL25 family. CTC subfamily. As to quaternary structure, part of the 50S ribosomal subunit; part of the 5S rRNA/L5/L18/L25 subcomplex. Contacts the 5S rRNA. Binds to the 5S rRNA independently of L5 and L18.

Functionally, this is one of the proteins that binds to the 5S RNA in the ribosome where it forms part of the central protuberance. The sequence is that of Large ribosomal subunit protein bL25 from Legionella pneumophila (strain Corby).